A 283-amino-acid chain; its full sequence is Non-selective voltage-gated ion channel VDAC1 (283 aa).

Alanine 2 is subject to N-acetylalanine. Position 12 (lysine 12) interacts with ATP. Residue lysine 12 forms a Glycyl lysine isopeptide (Lys-Gly) (interchain with G-Cter in ubiquitin) linkage. Serine 13 bears the Phosphoserine mark. A Phosphothreonine modification is found at threonine 19. Residue lysine 20 coordinates ATP. N6-acetyllysine; alternate is present on lysine 20. Lysine 20 carries the post-translational modification N6-succinyllysine; alternate. Residue lysine 20 forms a Glycyl lysine isopeptide (Lys-Gly) (interchain with G-Cter in ubiquitin); alternate linkage. 2 beta stranded membrane passes run 26–35 (LIKLDLKTKS) and 39–47 (LEFTSSGSA). Glycyl lysine isopeptide (Lys-Gly) (interchain with G-Cter in ubiquitin) cross-links involve residues lysine 53 and lysine 61. The chain crosses the membrane as a beta stranded span at residues 54–64 (VNGSLETKYRW). Phosphotyrosine is present on tyrosine 67. Beta stranded transmembrane passes span 69 to 76 (LTFTEKWN), 80 to 89 (TLGTEITVED), and 95 to 104 (LKLTFDSSFS). Threonine 107 is modified (phosphothreonine). Lysine 109 is subject to N6-acetyllysine; alternate. Lysine 109 is covalently cross-linked (Glycyl lysine isopeptide (Lys-Gly) (interchain with G-Cter in ubiquitin); alternate). A Glycyl lysine isopeptide (Lys-Gly) (interchain with G-Cter in ubiquitin) cross-link involves residue lysine 110. The next 4 membrane-spanning stretches (beta stranded) occupy residues 111-120 (NAKIKTGYKR), 123-130 (INLGCDVD), 137-145 (SIRGALVLG), and 150-158 (LAGYQMNFE). At serine 137 the chain carries Phosphoserine. Lysine 161 participates in a covalent cross-link: Glycyl lysine isopeptide (Lys-Gly) (interchain with G-Cter in ubiquitin). Transmembrane regions (beta stranded) follow at residues 163–175 (RVTQ…GYKT), 178–185 (FQLHTNVN), 189–198 (EFGGSIYQKV), 202–211 (LETAVNLAWT), 218–227 (RFGIAAKYQV), and 231–238 (ACFSAKVN). Serine 193 carries the phosphoserine; by NEK1 modification. Phosphoserine is present on serine 240. An NAD(+)-binding site is contributed by 242-244 (LIG). A beta stranded membrane pass occupies residues 242–251 (LIGLGYTQTL). An N6-acetyllysine modification is found at lysine 252. The chain crosses the membrane as a beta stranded span at residues 254 to 263 (GIKLTLSALL). An NAD(+)-binding site is contributed by 260-264 (SALLD). Position 266 is an N6-acetyllysine; alternate (lysine 266). A Glycyl lysine isopeptide (Lys-Gly) (interchain with G-Cter in ubiquitin); alternate cross-link involves residue lysine 266. The beta stranded transmembrane segment at 273-282 (HKLGLGLEFQ) threads the bilayer. A Glycyl lysine isopeptide (Lys-Gly) (interchain with G-Cter in ubiquitin) cross-link involves residue lysine 274.

This sequence belongs to the eukaryotic mitochondrial porin family. As to quaternary structure, homodimer and homotrimer; in response to cyclic AMP or calcium; oligomerization is required for scramblase activity. Component of the mitochondrial permeability transition pore complex (mPTPC), at least composed of SPG7, VDAC1 and PPIF. Interacts with SPG7, NIPSNAP2 and SLC25A30. Interacts with hexokinases including HK1. The HK1-VDAC1 complex interacts with ATF2. Interacts with BCL2L1. Interacts with BAK1. Interacts with RTL10/BOP (via BH3 domain). Interacts with amyloid-beta and APP; induces VDAC1 dephosphorylation. Interacts with TMEM41B. Interacts with BCAP31. Interacts with HSPA9; this interaction couples ITPR1 to VDAC1. Phosphorylation at Ser-193 by NEK1 promotes the closed conformational state preventing excessive mitochondrial membrane permeability and subsequent apoptotic cell death after injury. Phosphorylation by the AKT-GSK3B axis stabilizes the protein probably by preventing ubiquitin-mediated proteasomal degradation. In terms of processing, ubiquitinated. Undergoes monoubiquitination and polyubiquitination by PRKN; monoubiquitination at Lys-274 inhibits apoptosis, whereas polyubiquitination leads to its degradation and promotes mitophagy. Deubiquitinated by USP30. As to expression, widely expressed. High levels in heart and kidney with lower levels in brain and ascitic tumor. Very low levels in liver.

Its subcellular location is the mitochondrion outer membrane. The protein localises to the cell membrane. It localises to the membrane raft. The enzyme catalyses Ca(2+)(in) = Ca(2+)(out). It carries out the reaction Na(+)(in) = Na(+)(out). It catalyses the reaction chloride(in) = chloride(out). The catalysed reaction is Mg(2+)(in) = Mg(2+)(out). The enzyme catalyses K(+)(in) = K(+)(out). It carries out the reaction ATP(in) = ATP(out). It catalyses the reaction L-glutamate(out) = L-glutamate(in). The catalysed reaction is dopamine(out) = dopamine(in). The enzyme catalyses acetylcholine(in) = acetylcholine(out). It carries out the reaction Fe(III)-[cytochrome c](out) = Fe(III)-[cytochrome c](in). It catalyses the reaction a 1,2-diacyl-sn-glycero-3-phosphocholine(in) = a 1,2-diacyl-sn-glycero-3-phosphocholine(out). The catalysed reaction is a 1,2-diacyl-sn-glycero-3-phospho-L-serine(in) = a 1,2-diacyl-sn-glycero-3-phospho-L-serine(out). Its activity is regulated as follows. Inhibited by nitric oxide. Voltage-gated ion channel activity is inhibited by lanthanum(3+) and ruthenium red. Mitochondrial calcium transport is inhibited by lanthanum(3+), ruthenium red and Ru360. In terms of biological role, non-selective voltage-gated ion channel that mediates the transport of anions and cations through the mitochondrion outer membrane and plasma membrane. The channel at the outer mitochondrial membrane allows diffusion of small hydrophilic molecules; in the plasma membrane it is involved in cell volume regulation and apoptosis. It adopts an open conformation at low or zero membrane potential and a closed conformation at potentials above 30-40 mV. The open state has a weak anion selectivity whereas the closed state is cation-selective. Binds various signaling molecules, including the sphingolipid ceramide, the phospholipid phosphatidylcholine, and the sterols cholesterol and oxysterol. In depolarized mitochondria, acts downstream of PRKN and PINK1 to promote mitophagy or prevent apoptosis; polyubiquitination by PRKN promotes mitophagy, while monoubiquitination by PRKN decreases mitochondrial calcium influx which ultimately inhibits apoptosis. May participate in the formation of the permeability transition pore complex (PTPC) responsible for the release of mitochondrial products that triggers apoptosis. May mediate ATP export from cells. Part of a complex composed of HSPA9, ITPR1 and VDAC1 that regulates mitochondrial calcium-dependent apoptosis by facilitating calcium transport from the ER lumen to the mitochondria intermembrane space thus providing calcium for the downstream calcium channel MCU that directly releases it into mitochondria matrix. Functionally, catalyzes the scrambling of phospholipids across the outer mitochondrial membrane; the mechanism is unrelated to channel activity and is capable of translocating both anionic and zwitterionic phospholipids. In Rattus norvegicus (Rat), this protein is Non-selective voltage-gated ion channel VDAC1.